Here is a 146-residue protein sequence, read N- to C-terminus: D-aminoacyl-tRNA deacylase (146 aa).

Positions 137-138 (GP) match the Gly-cisPro motif, important for rejection of L-amino acids motif.

It belongs to the DTD family. Homodimer.

The protein localises to the cytoplasm. It carries out the reaction glycyl-tRNA(Ala) + H2O = tRNA(Ala) + glycine + H(+). It catalyses the reaction a D-aminoacyl-tRNA + H2O = a tRNA + a D-alpha-amino acid + H(+). Its function is as follows. An aminoacyl-tRNA editing enzyme that deacylates mischarged D-aminoacyl-tRNAs. Also deacylates mischarged glycyl-tRNA(Ala), protecting cells against glycine mischarging by AlaRS. Acts via tRNA-based rather than protein-based catalysis; rejects L-amino acids rather than detecting D-amino acids in the active site. By recycling D-aminoacyl-tRNA to D-amino acids and free tRNA molecules, this enzyme counteracts the toxicity associated with the formation of D-aminoacyl-tRNA entities in vivo and helps enforce protein L-homochirality. This Bacillus thuringiensis (strain Al Hakam) protein is D-aminoacyl-tRNA deacylase.